The primary structure comprises 480 residues: Cysteine--tRNA ligase (480 aa).

Cysteine 31 contacts Zn(2+). Positions 33-43 (PTVYDSSHIGH) match the 'HIGH' region motif. 3 residues coordinate Zn(2+): cysteine 211, histidine 236, and glutamate 240. Positions 269 to 273 (KMSKS) match the 'KMSKS' region motif. Lysine 272 contributes to the ATP binding site.

This sequence belongs to the class-I aminoacyl-tRNA synthetase family. The cofactor is Zn(2+).

It catalyses the reaction tRNA(Cys) + L-cysteine + ATP = L-cysteinyl-tRNA(Cys) + AMP + diphosphate. The chain is Cysteine--tRNA ligase from Encephalitozoon cuniculi (strain GB-M1) (Microsporidian parasite).